Consider the following 203-residue polypeptide: Glycerol-3-phosphate acyltransferase (203 aa).

4 consecutive transmembrane segments (helical) span residues 6–26 (LTLL…AVLV), 82–102 (AISL…PIFF), 118–138 (APIG…LVLI), and 141–161 (YSSL…WWLD).

Belongs to the PlsY family. In terms of assembly, probably interacts with PlsX.

Its subcellular location is the cell inner membrane. The enzyme catalyses an acyl phosphate + sn-glycerol 3-phosphate = a 1-acyl-sn-glycero-3-phosphate + phosphate. It functions in the pathway lipid metabolism; phospholipid metabolism. Its function is as follows. Catalyzes the transfer of an acyl group from acyl-phosphate (acyl-PO(4)) to glycerol-3-phosphate (G3P) to form lysophosphatidic acid (LPA). This enzyme utilizes acyl-phosphate as fatty acyl donor, but not acyl-CoA or acyl-ACP. In Shewanella sp. (strain MR-7), this protein is Glycerol-3-phosphate acyltransferase.